The following is a 265-amino-acid chain: uncharacterized protein (265 aa).

Residues 122-145 (THYRDNGQTPPRDTRPHGGISLGG) form a disordered region.

This is an uncharacterized protein from Zymomonas mobilis subsp. mobilis (strain ATCC 31821 / ZM4 / CP4).